The sequence spans 531 residues: Protein SIS2 (531 aa).

A compositionally biased stretch (basic and acidic residues) spans 1–20 (MPSDKDIKSPAQPKKEEEIP). Disordered regions lie at residues 1–42 (MPSD…ANII), 88–127 (SPDS…KSPS), 139–168 (RPVR…EPSS), 180–261 (SLRA…DPRL), and 461–531 (YPED…TTNL). Positions 155 to 168 (LTPITSPQHSEPSS) are enriched in polar residues. The segment covering 183–198 (ATTNSISSAAASNQST) has biased composition (low complexity). The segment covering 204–213 (SGGGGGGGGA) has biased composition (gly residues). Low complexity predominate over residues 214–249 (NTATSSNSTTSNTALAAQGTTTTTTTTNSNSNTTTT). Composition is skewed to acidic residues over residues 462–472 (PEDEDEDEADD) and 481–514 (AIID…EEDP).

Belongs to the HFCD (homooligomeric flavin containing Cys decarboxylase) superfamily.

Its subcellular location is the nucleus. It localises to the cytoplasm. Functionally, may stimulate expression of certain genes that are periodically expressed during late G1. Also modulates the expression of the ENA1 ATPase. The sequence is that of Protein SIS2 (SIS2) from Candida tropicalis (Yeast).